Consider the following 445-residue polypeptide: T-box transcription factor TBX19 (445 aa).

Residues 45–218 constitute a DNA-binding region (T-box); it reads LEDAPLWQRF…YNPFAKAFLD (174 aa).

The protein localises to the nucleus. In terms of biological role, transcriptional regulator involved in developmental processes. Can activate POMC gene expression and repress the alpha glycoprotein subunit and thyroid-stimulating hormone beta promoters. The protein is T-box transcription factor TBX19 of Canis lupus familiaris (Dog).